A 383-amino-acid chain; its full sequence is Dual-specificity RNA methyltransferase RlmN (383 aa).

The active-site Proton acceptor is E93. The Radical SAM core domain maps to E99–D339. The cysteines at positions 106 and 344 are disulfide-linked. [4Fe-4S] cluster is bound by residues C113, C117, and C120. Residues G170–E171, S202, S224–H226, and N301 contribute to the S-adenosyl-L-methionine site. Residue C344 is the S-methylcysteine intermediate of the active site.

This sequence belongs to the radical SAM superfamily. RlmN family. Requires [4Fe-4S] cluster as cofactor.

Its subcellular location is the cytoplasm. The enzyme catalyses adenosine(2503) in 23S rRNA + 2 reduced [2Fe-2S]-[ferredoxin] + 2 S-adenosyl-L-methionine = 2-methyladenosine(2503) in 23S rRNA + 5'-deoxyadenosine + L-methionine + 2 oxidized [2Fe-2S]-[ferredoxin] + S-adenosyl-L-homocysteine. It carries out the reaction adenosine(37) in tRNA + 2 reduced [2Fe-2S]-[ferredoxin] + 2 S-adenosyl-L-methionine = 2-methyladenosine(37) in tRNA + 5'-deoxyadenosine + L-methionine + 2 oxidized [2Fe-2S]-[ferredoxin] + S-adenosyl-L-homocysteine. Its function is as follows. Specifically methylates position 2 of adenine 2503 in 23S rRNA and position 2 of adenine 37 in tRNAs. m2A2503 modification seems to play a crucial role in the proofreading step occurring at the peptidyl transferase center and thus would serve to optimize ribosomal fidelity. The polypeptide is Dual-specificity RNA methyltransferase RlmN (Ralstonia pickettii (strain 12J)).